An 817-amino-acid chain; its full sequence is U3 small nucleolar RNA-associated protein 13 (817 aa).

WD repeat units follow at residues 59-100, 102-139, 142-187, 191-233, 238-280, 386-425, 432-476, 489-528, 531-572, 573-614, 616-654, and 664-705; these read EDEQ…RSMK, SSPS…ITHS, GHGG…HTLQ, SAVR…KCKL, PVNQ…VLKR, GHED…CKFD, GHSA…ASMD, AHEK…LEAT, NHKR…KTLE, GHTN…KTLD, HNNR…EIEE, and EQEQ…LGES.

As to quaternary structure, interacts with snoRNA U3. Interacts with MPP10. Component of the ribosomal small subunit (SSU) processome composed of at least 40 protein subunits and snoRNA U3.

Its subcellular location is the nucleus. It is found in the nucleolus. In terms of biological role, involved in nucleolar processing of pre-18S ribosomal RNA. This is U3 small nucleolar RNA-associated protein 13 (UTP13) from Saccharomyces cerevisiae (strain ATCC 204508 / S288c) (Baker's yeast).